Reading from the N-terminus, the 263-residue chain is Chaperone protein ClpE (263 aa).

Residues 1–34 (MSKRNAVTTFFTNRVTKALGMTLALMMTCQSAMA) form the signal peptide. Polar residues predominate over residues 238 to 255 (QKKTPTSSGQKASDSLVN). A disordered region spans residues 238 to 263 (QKKTPTSSGQKASDSLVNPSDKADKK).

The protein belongs to the periplasmic pilus chaperone family.

It is found in the periplasm. Functionally, involved in the biogenesis of the CS31A capsule-like antigen. The protein is Chaperone protein ClpE (clpE) of Escherichia coli.